The sequence spans 311 residues: Methenyltetrahydromethanopterin cyclohydrolase (311 aa).

Belongs to the MCH family.

The protein localises to the cytoplasm. The enzyme catalyses 5,10-methenyl-5,6,7,8-tetrahydromethanopterin + H2O = N(5)-formyl-5,6,7,8-tetrahydromethanopterin + H(+). Catalyzes the hydrolysis of methenyl-H(4)MPT(+) to 5-formyl-H(4)MPT. The protein is Methenyltetrahydromethanopterin cyclohydrolase of Halobacterium salinarum (strain ATCC 29341 / DSM 671 / R1).